Consider the following 283-residue polypeptide: Alpha-ketoglutarate-dependent taurine dioxygenase (283 aa).

Taurine contacts are provided by histidine 70, tyrosine 73, and asparagine 95. Residues histidine 99 and aspartate 101 each coordinate Fe cation. Valine 102 is a taurine binding site. Threonine 126 is a binding site for 2-oxoglutarate. Residues tryptophan 128, tryptophan 240, and tryptophan 248 each carry the 3-hydroxytryptophan; by autocatalysis modification. Histidine 255 provides a ligand contact to Fe cation. Residues histidine 255, arginine 266, and arginine 270 each coordinate 2-oxoglutarate. Arginine 270 is a binding site for taurine.

The protein belongs to the TfdA dioxygenase family. Homodimer. Was later shown to be a homotetramer arranged as a dimer of two dimers. Requires Fe(2+) as cofactor.

It carries out the reaction taurine + 2-oxoglutarate + O2 = aminoacetaldehyde + sulfite + succinate + CO2 + H(+). It participates in organosulfur degradation; taurine degradation via aerobic pathway; aminoacetaldehyde and sulfite from taurine: step 1/1. With respect to regulation, activated by ascorbate and inhibited by divalent metal ions such as zinc, copper and cobalt. In terms of biological role, catalyzes the alpha-ketoglutarate-dependent hydroxylation of taurine yielding sulfite and aminoacetaldehyde after decomposition of an unstable intermediate. Is required for the utilization of taurine (2-aminoethanesulfonate) as an alternative sulfur source for growth in the absence of sulfate. To a lesser extent, pentanesulfonate, 3-(N-morpholino)propanesulfonate and 1,3-dioxo-2-isoindolineethanesulfonate are also desulfonated by this enzyme in vitro; however, desulfonation by TauD of organosulfonates other than taurine seem to be of little or no importance for sulfur metabolism in vivo. In Escherichia coli (strain K12), this protein is Alpha-ketoglutarate-dependent taurine dioxygenase (tauD).